The primary structure comprises 111 residues: UPF0145 protein BRADO6695 (111 aa).

Belongs to the UPF0145 family.

The protein is UPF0145 protein BRADO6695 of Bradyrhizobium sp. (strain ORS 278).